A 1385-amino-acid chain; its full sequence is MLNRENKTAITRKGMVSNRLNKFSIRKYTVGTASILVGTTLIFGLGNQEAKAAESTNKELNEATTSASDNQSSDKVDMQQLNQEDNTKNDNQKEMVSSQGNETTSNGNKSIEKESVQSTTGNKVEVSTAKSDEQASPKSTNEDLNTKQTISNQEGLQPDLLENKSVVNVQPTNEENKKVDAKTESTTLNVKSDAIKSNAETLVDNNSNSNNENNADIILPKSTAPKSLNTRMRMAAIQPNSTDSKNVNDLITSNTTLTVVDADNSKTIVPAQDYLSLKSQITVDDKVKSGDYFTIKYSDTVQVYGLNPEDIKNIGDIKDPNNGETIATAKHDTANNLITYTFTDYVDRFNSVKMGINYSIYMDADTIPVDKKDVPFSVTIGNQITTTTADITYPAYKEADNNSIGSAFTETVSHVGNVEDPGYYNQVVYVNPMDKDLKGAKLKVEAYHPKYPTNIGQINQNVTNIKIYRVPEGYTLNKGYDVNTNDLVDVTDEFKNKMTYGSNQSVNLDFGDITSAYVVMVNTKFQYTNSESPTLVQMATLSSTGNKSVSTGNALGFTNNQSGGAGQEVYKIGNYVWEDTNKNGVQELGEKGVGNVTVTVFDNNTNTKVGEAVTKEDGSYLIPNLPNGDYRVEFSNLPKGYEVTPSKQGNNEELDSNGLSSVITVNGKDNLSADLGIYKPKYNLGDYVWEDTNKNGIQDQDEKGISGVTVTLKDENGNVLKTVTTDADGKYKFTDLDNGNYKVEFTTPEGYTPTTVTSGSDIEKDSNGLTTTGVINGADNMTLDSGFYKTPKYNLGNYVWEDTNKDGKQDSTEKGISGVTVTLKNENGEVLQTTKTDKDGKYQFTGLENGTYKVEFETPSGYTPTQVGSGTDEGIDSNGTSTTGVIKDKDNDTIDSGFYKPTYNLGDYVWEDTNKNGVQDKDEKGISGVTVTLKDENDKVLKTVTTDENGKYQFTDLNNGTYKVEFETPSGYTPTSVTSGNDTEKDSNGLTTTGVIKDADNMTLDSGFYKTPKYSLGDYVWYDSNKDGKQDSTEKGIKDVKVILLNEKGEVIGTTKTDENGKYRFDNLDSGKYKVIFEKPTGLTQTGTNTTEDDKDADGGEVDVTITDHDDFTLDNGYYEEETSDSDSDSDSDSDSDSDSDSDSDSDSDSDSDSDSDSDSDSDSDSDSDSDSDSDSDSDSDSDSDSDSDSDSDSDSDSDSDSDSDSDSDSDSDSDSDSDSDSDSDSDSDSDSDSDSDSDSDSDSDSDSDSDSDSDSDSDSDSDSDSDSDSDSDSDSDSDSDSDSDSDSDSDSDSDSDSDSDSDSDSDSDSDSDSDSDSDSDSDSDAGKHTPVKPMSTTKDHHNKAKALPETGNENSGSNNATLFGGLFAALGSLLLFGRRKKQNK.

Residues 1–35 (MLNRENKTAITRKGMVSNRLNKFSIRKYTVGTASI) form the signal peptide. Residues 23–34 (FSIRKYTVGTAS) carry the YSIRK-G/S signaling motif motif. The segment at 36–568 (LVGTTLIFGL…NNQSGGAGQE (533 aa)) is ligand binding A region. 2 disordered regions span residues 54 to 162 (ESTN…DLLE) and 200 to 224 (ETLV…KSTA). Polar residues-rich tracts occupy residues 62–71 (EATTSASDNQ) and 94–109 (EMVS…NGNK). Residues 130–145 (KSDEQASPKSTNEDLN) are compositionally biased toward basic and acidic residues. Over residues 146 to 155 (TKQTISNQEG) the composition is skewed to polar residues. Over residues 205 to 214 (NNSNSNNENN) the composition is skewed to low complexity. 5 consecutive CNA-B domains span residues 569 to 680 (VYKI…IYKP), 681 to 791 (KYNL…YKTP), 792 to 901 (KYNL…FYKP), 902 to 1012 (TYNL…YKTP), and 1013 to 1123 (KYSL…EEET). Disordered stretches follow at residues 856-886 (FETP…TGVI), 972-992 (YTPT…GLTT), and 1077-1361 (FEKP…SNNA). Composition is skewed to polar residues over residues 860–869 (SGYTPTQVGS) and 972–981 (YTPTSVTSGN). Over residues 1081–1090 (TGLTQTGTNT) the composition is skewed to low complexity. Composition is skewed to acidic residues over residues 1091 to 1101 (TEDDKDADGGE) and 1118 to 1324 (YYEE…DSDS). The LPXTG sorting signal motif lies at 1348–1352 (LPETG). T1351 carries the pentaglycyl murein peptidoglycan amidated threonine modification. Positions 1352 to 1385 (GNENSGSNNATLFGGLFAALGSLLLFGRRKKQNK) are cleaved as a propeptide — removed by sortase.

It belongs to the serine-aspartate repeat-containing protein (SDr) family. As to quaternary structure, interacts with host DSG1; this interaction increases S.aureus adherence to keratinocytes.

Its subcellular location is the secreted. The protein localises to the cell wall. In terms of biological role, cell surface-associated calcium-binding protein which plays an important role in adhesion and pathogenesis. Mediates interactions with components of the extracellular matrix such as host DSG1 to promote bacterial adhesion to host cells. Contributes to the resistance to killing by innate immune components such as neutrophils present in blood and thus attenuates bacterial clearance. The polypeptide is Serine-aspartate repeat-containing protein D (sdrD) (Staphylococcus aureus (strain Mu50 / ATCC 700699)).